A 1138-amino-acid chain; its full sequence is Solute carrier family 12 member 5 (1138 aa).

Disordered stretches follow at residues 1–62 (MSRR…KGRE) and 96–116 (QGSREHEEAENNEGGKKKPVQ). Over 1 to 98 (MSRRFTVTSL…ANYTNLPQGS (98 aa)) the chain is Cytoplasmic. Over residues 21–45 (PESRRHSVADPRRLPREDVKGDGNP) the composition is skewed to basic and acidic residues. The span at 46 to 55 (KESSPFINST) shows a compositional bias: polar residues. A Phosphothreonine modification is found at Thr-57. The span at 98–111 (SREHEEAENNEGGK) shows a compositional bias: basic and acidic residues. A discontinuously helical transmembrane segment spans residues 99–120 (REHEEAENNEGGKKKPVQAPRM). Lys-113 serves as a coordination point for K(+). At 121–129 (GTFMGVYLP) the chain is on the extracellular side. The helical transmembrane segment at 130–151 (CLQNIFGVILFLRLTWVVGIAG) threads the bilayer. At 152–174 (IMESFCMVFICCSCTMLTAISMS) the chain is on the cytoplasmic side. A helical transmembrane segment spans residues 175 to 203 (AIATNGVVPAGGSYYMISRSLGPEFGGAV). Position 184 (Ala-184) interacts with chloride. Topologically, residues 204–229 (GLCFYLGTTFAGAMYILGTIEILLAY) are extracellular. 2 helical membrane passes run 230-250 (LFPAMAIFKAEDASGEAAAML) and 251-276 (NNMRVYGTCVLTCMATVVFVGVKYVN). Topologically, residues 277–402 (KFALVFLGCV…ERRGMPSVGL (126 aa)) are extracellular. An intrachain disulfide couples Cys-310 to Cys-325. N-linked (GlcNAc...) asparagine glycosylation is found at Asn-314, Asn-333, Asn-351, and Asn-362. The cysteines at positions 345 and 354 are disulfide-linked. A helical transmembrane segment spans residues 403–420 (ADGTPVDMDHPYVFSDMT). Met-410 contacts K(+). Tyr-414 and Val-415 together coordinate chloride. Over 421 to 429 (SYFTLLVGI) the chain is Cytoplasmic. The helical transmembrane segment at 430–453 (YFPSVTGIMAGSNRSGDLRDAQKS) threads the bilayer. Asp-446 is a binding site for K(+). Topologically, residues 454-485 (IPTGTILAIATTSAVYISSVVLFGACIEGVVL) are extracellular. The helical transmembrane segment at 486–513 (RDKFGEAVNGNLVVGTLAWPSPWVIVIG) threads the bilayer. Over 514-534 (SFFSTCGAGLQSLTGAPRLLQ) the chain is Cytoplasmic. Transmembrane regions (helical) follow at residues 535 to 555 (AISRDGIVPFLQVFGHGKANG) and 556 to 578 (EPTWALLLTACICEIGILIASLD). Glu-569 contacts chloride. Residues 579 to 592 (EVAPILSMFFLMCY) lie on the Cytoplasmic side of the membrane. The next 2 helical transmembrane spans lie at 593–615 (MFVNLACAVQTLLRTPNWRPRFR) and 616–632 (YYHWTLSFLGMSLCLAL). Topologically, residues 633–1138 (MFICSWYYAL…GGREVITIYS (506 aa)) are cytoplasmic. Residues 667–681 (GIRGLSLSAARYALL) form a scissor helix region. Thr-929 carries the phosphothreonine; by OXSR1 and STK39 modification. Residues 943–1051 (HLTKNERERE…GPSPVSSEGI (109 aa)) are disordered. The segment covering 945-962 (TKNEREREIQSITDESRG) has biased composition (basic and acidic residues). Residues 982-994 (TACDNEEKPEEEV) are compositionally biased toward acidic residues. A compositionally biased stretch (low complexity) spans 1001 to 1012 (SAPSCPSSSPSP). Basic and acidic residues predominate over residues 1019-1041 (ERETDPEVHLTWTKDKSVAEKNK). Thr-1029 is subject to Phosphothreonine; by OXSR1 and STK39. Phosphoserine is present on residues Ser-1044, Ser-1047, and Ser-1048.

Belongs to the SLC12A transporter family. K/Cl co-transporter subfamily. Homodimer; adopts a domain-swap conformation at the scissor helices connecting the transmembrane domain and C-terminal domain. Heterodimer with K-Cl cotransporters SLC12A6 and SLC12A7. Interacts with AP2A1. Phosphorylated at Thr-929 and Thr-1029 by OXSR1/OSR1 and STK39/SPAK downstream of WNK kinases (WNK1, WNK2, WNK3 or WNK4), inhibiting the potassium-chloride cotransport activity. Expressed in brainstem, spinal cord and olfactory bulb of 17 dpc embryos. Expressed in all parts of the brain and spinal cord in postnatal day 14 mice. As to expression, expressed in brainstem and spinal cord of 17 dpc embryos. Expressed in all parts of the brain and spinal cord in postnatal day 14 mice.

Its subcellular location is the cell membrane. It localises to the cell projection. The protein resides in the dendrite. It catalyses the reaction K(+)(in) + chloride(in) = K(+)(out) + chloride(out). With respect to regulation, inhibited following phosphorylation by OXSR1/OSR1 and STK39/SPAK: phosphorylation takes place downstream of WNK kinases (WNK1, WNK2, WNK3 or WNK4) in response to hyperosmotic stress and subsequent cell shrinkage. Mediates electroneutral potassium-chloride cotransport in mature neurons and is required for neuronal Cl(-) homeostasis. As major extruder of intracellular chloride, it establishes the low neuronal Cl(-) levels required for chloride influx after binding of GABA-A and glycine to their receptors, with subsequent hyperpolarization and neuronal inhibition. Involved in the regulation of dendritic spine formation and maturation. The protein is Solute carrier family 12 member 5 (Slc12a5) of Mus musculus (Mouse).